The chain runs to 858 residues: DNA mismatch repair protein MutS (858 aa).

Residue 600–607 (GPNMSGKS) participates in ATP binding. Positions 803 to 823 (EAASDEVDDNNSENSPMTDAE) are disordered.

It belongs to the DNA mismatch repair MutS family.

In terms of biological role, this protein is involved in the repair of mismatches in DNA. It is possible that it carries out the mismatch recognition step. This protein has a weak ATPase activity. The sequence is that of DNA mismatch repair protein MutS from Lactobacillus helveticus (strain DPC 4571).